Reading from the N-terminus, the 767-residue chain is Protein transport protein Sec23B (767 aa).

At A2 the chain carries N-acetylalanine. Zn(2+) is bound by residues C61, C66, C85, and C88. Position 564 is an N6-acetyllysine (K564). One copy of the Gelsolin-like repeat lies at 634–720 (PEPVLLDSSS…EHGGSQARFL (87 aa)).

The protein belongs to the SEC23/SEC24 family. SEC23 subfamily. As to quaternary structure, COPII is composed of at least five proteins: the Sec23/24 complex, the Sec13/31 complex and Sar1. Interacts with SAR1A.

It is found in the cytoplasmic vesicle. The protein resides in the COPII-coated vesicle membrane. It localises to the endoplasmic reticulum membrane. Its subcellular location is the cytoplasm. The protein localises to the cytosol. Its function is as follows. Component of the coat protein complex II (COPII) which promotes the formation of transport vesicles from the endoplasmic reticulum (ER). The coat has two main functions, the physical deformation of the endoplasmic reticulum membrane into vesicles and the selection of cargo molecules for their transport to the Golgi complex. The chain is Protein transport protein Sec23B from Mus musculus (Mouse).